A 375-amino-acid polypeptide reads, in one-letter code: ORC1-type DNA replication protein 3 (375 aa).

ATP-binding positions include 66–70 (TGKTT), Y209, and R221.

The protein belongs to the CDC6/cdc18 family.

In terms of biological role, involved in regulation of DNA replication. The chain is ORC1-type DNA replication protein 3 (cdc6c) from Haloarcula marismortui (strain ATCC 43049 / DSM 3752 / JCM 8966 / VKM B-1809) (Halobacterium marismortui).